Consider the following 49-residue polypeptide: Metallothionein (49 aa).

The interval 1-16 (SCAGSCKCKNCRCRSC) is beta. 17 residues coordinate a divalent metal cation: Cys-2, Cys-6, Cys-8, Cys-11, Cys-13, Cys-16, Cys-20, Cys-21, Cys-23, Cys-24, Cys-28, Cys-31, Cys-35, Cys-37, Cys-45, Cys-47, and Cys-48. The alpha stretch occupies residues 17–49 (RKSCCSCCPAGCNNCAKGCVCKEPASSKCSCCH).

It belongs to the metallothionein superfamily. Type 1 family.

Functionally, metallothioneins have a high content of cysteine residues that bind various heavy metals. The chain is Metallothionein from Phasianus colchicus colchicus (Black-necked pheasant).